The following is a 592-amino-acid chain: Probable tubulin polyglutamylase TTLL2 (592 aa).

2 disordered regions span residues 1 to 23 (MRGR…TTTP) and 51 to 77 (GVSI…MAED). Residues 7 to 23 (CSSTQSQALGSLRTTTP) are compositionally biased toward polar residues. Residues 84–427 (LKPLVFRVDE…NGLRNEGREA (344 aa)) enclose the TTL domain. ATP contacts are provided by residues Lys-212, 218–219 (RG), 240–243 (QKYI), and 253–255 (KCD). Position 218 (Arg-218) interacts with a protein. Arg-279 lines the L-glutamate pocket. 298 to 299 (TN) is a binding site for ATP. L-glutamate-binding residues include Ser-301 and Lys-321. Mg(2+)-binding residues include Asp-373, Glu-386, and Asn-388. Lys-404 contributes to the L-glutamate binding site.

The protein belongs to the tubulin--tyrosine ligase family. It depends on Mg(2+) as a cofactor. As to expression, testis.

Its function is as follows. Probable tubulin polyglutamylase that generates side chains of glutamate on the gamma-carboxyl group of specific glutamate residues within the C-terminal tail of target proteins. Similar to TTLL1, may acquire enzymatic activity only in complex with other proteins as it is most likely lacking domains important for autonomous activity. Probably involved in the side-chain initiation step of the polyglutamylation reaction rather than the elongation step. This Homo sapiens (Human) protein is Probable tubulin polyglutamylase TTLL2.